A 1340-amino-acid polypeptide reads, in one-letter code: Iron-sulfur cluster assembly protein SufD (1340 aa).

Over residues 477–487 (NSLKHNNNNTK) the composition is skewed to low complexity. Disordered regions lie at residues 477 to 498 (NSLK…ERSS), 723 to 743 (HGKD…NYLN), 765 to 794 (NVST…QSTV), 835 to 865 (EKNE…GEKK), and 992 to 1055 (NIPT…NNIQ). A compositionally biased stretch (basic and acidic residues) spans 723–734 (HGKDNTQHDDKN). Residues 782–794 (NPDTETNNEQSTV) are compositionally biased toward polar residues. Residues 1022 to 1037 (DNLLQNDQATNSNVEI) are compositionally biased toward polar residues.

Belongs to the iron-sulfur cluster assembly SufBD family. Component of a complex composed of SufB, SufC and SufD in a stoichiometric ratio of 1:2:1. Interacts with SufB. Interacts with SufC; the interaction enhances the ATPase activity of SufC.

The protein resides in the plastid. It localises to the apicoplast. It functions in the pathway cofactor biosynthesis; iron-sulfur cluster biosynthesis. In terms of biological role, participates in the sulfur mobilization (SUF) pathway for iron-sulfur (Fe-S) cluster biogenesis. As part of a complex consisting of SufB-SufC(2)-SufD, involved in assembly of [4Fe-4S] clusters. Enhances the ATPase activity of SufC. The protein is Iron-sulfur cluster assembly protein SufD of Plasmodium berghei (strain Anka).